A 652-amino-acid chain; its full sequence is DNA ligase (652 aa).

Residues 29–33, 78–79, and glutamate 107 each bind NAD(+); these read DAEYD and SL. Catalysis depends on lysine 109, which acts as the N6-AMP-lysine intermediate. NAD(+) is bound by residues arginine 130, glutamate 164, lysine 278, and lysine 302. Cysteine 395, cysteine 398, cysteine 413, and cysteine 418 together coordinate Zn(2+). Residues 577 to 652 form the BRCT domain; sequence DENAALSGMT…IKDEAWLESL (76 aa).

It belongs to the NAD-dependent DNA ligase family. LigA subfamily. Mg(2+) is required as a cofactor. It depends on Mn(2+) as a cofactor.

The enzyme catalyses NAD(+) + (deoxyribonucleotide)n-3'-hydroxyl + 5'-phospho-(deoxyribonucleotide)m = (deoxyribonucleotide)n+m + AMP + beta-nicotinamide D-nucleotide.. In terms of biological role, DNA ligase that catalyzes the formation of phosphodiester linkages between 5'-phosphoryl and 3'-hydroxyl groups in double-stranded DNA using NAD as a coenzyme and as the energy source for the reaction. It is essential for DNA replication and repair of damaged DNA. This Streptococcus suis (strain 05ZYH33) protein is DNA ligase.